A 978-amino-acid chain; its full sequence is Sensor histidine kinase TodS (978 aa).

In terms of domain architecture, PAS 1 spans 32–103 (CEEHARIIFD…TQKRLVETAS (72 aa)). One can recognise a PAC 1 domain in the interval 108–162 (VRCDVEILGKSGGREVIAVDFSLLPICNEEGSIVYLLAEGRNITDKKKAEAMLAL). A Histidine kinase 1 domain is found at 187–405 (KVSHELRTPL…LFQVKLPLNA (219 aa)). Position 190 is a phosphohistidine; by autocatalysis (His190). Residues 452-567 (RVLIVEDNPD…ELRARVSNLV (116 aa)) form the Response regulatory domain. 4-aspartylphosphate is present on Asp500. The PAS 2 domain occupies 611–681 (SEARWKAVYE…QRLANLLQGG (71 aa)). Residues 685-737 (YSVERSYLCKNGSTIWANASVSLMPQRVGESPVILQIIDDITEKKQAQENLNQ) enclose the PAC 2 domain. The Histidine kinase 2 domain occupies 757–974 (YIAHEINQPL…CFLVSIPARQ (218 aa)). His760 carries the post-translational modification Phosphohistidine.

In terms of assembly, homodimer. Binds as a dimer to a pseudopalindromic sequence. In terms of processing, autophosphorylated. Activation requires a sequential transfer of a phosphate group from a His in the primary transmitter domain, to an Asp in the receiver domain and to a His in the secondary transmitter domain.

The protein localises to the cytoplasm. The catalysed reaction is ATP + protein L-histidine = ADP + protein N-phospho-L-histidine.. Member of the two-component regulatory system TodS/TodT involved in the regulation of toluene degradation. Phosphorylates TodT via a four-step phosphorelay in response to toluene. The polypeptide is Sensor histidine kinase TodS (todS) (Pseudomonas putida (strain ATCC 700007 / DSM 6899 / JCM 31910 / BCRC 17059 / LMG 24140 / F1)).